Here is a 33-residue protein sequence, read N- to C-terminus: Protamine TP16 (33 aa).

The segment at 1–33 (MPRRRRSSSRPVRRRRRARVSRRRRRRGRRRRR) is disordered.

In terms of tissue distribution, testis.

The protein resides in the nucleus. It is found in the chromosome. In terms of biological role, protamines substitute for histones in the chromatin of sperm during the haploid phase of spermatogenesis. They compact sperm DNA into a highly condensed, stable and inactive complex. The chain is Protamine TP16 from Oncorhynchus mykiss (Rainbow trout).